The primary structure comprises 234 residues: Coiled-coil domain-containing protein 194 (234 aa).

The first 42 residues, 1–42 (MAEPGPEPGRAWRVLALCGVAVFLAAAAAGGALVAWNLAASA), serve as a signal peptide directing secretion. Disordered regions lie at residues 44 to 67 (RGPR…PGVD) and 187 to 234 (VLEA…RARG). The stretch at 66–163 (VDDLRRRLAE…TRRLDEALRR (98 aa)) forms a coiled coil. Over residues 187-196 (VLEAEMSPQR) the composition is skewed to low complexity. A compositionally biased stretch (basic residues) spans 197 to 217 (RVPRPRPRSGSRPRPSPRSRS).

The sequence is that of Coiled-coil domain-containing protein 194 from Homo sapiens (Human).